A 599-amino-acid chain; its full sequence is UvrABC system protein C (599 aa).

The GIY-YIG domain occupies 15 to 93 (EKPGCYQYFD…IKEYQPRYNV (79 aa)). Positions 207 to 242 (HRLVRMYRDRMQVYSEGLRFEEAQICKERIELLERY) constitute a UVR domain.

It belongs to the UvrC family. In terms of assembly, interacts with UvrB in an incision complex.

It localises to the cytoplasm. In terms of biological role, the UvrABC repair system catalyzes the recognition and processing of DNA lesions. UvrC both incises the 5' and 3' sides of the lesion. The N-terminal half is responsible for the 3' incision and the C-terminal half is responsible for the 5' incision. This is UvrABC system protein C from Porphyromonas gingivalis (strain ATCC BAA-308 / W83).